Here is a 343-residue protein sequence, read N- to C-terminus: Anthranilate phosphoribosyltransferase (343 aa).

5-phospho-alpha-D-ribose 1-diphosphate is bound by residues G86, 89 to 90 (GD), T94, 96 to 99 (NIST), 114 to 122 (KHGNKSASG), and S126. Anthranilate is bound at residue G86. Residue S98 participates in Mg(2+) binding. N117 contacts anthranilate. Residue R172 participates in anthranilate binding. Positions 231 and 232 each coordinate Mg(2+).

Belongs to the anthranilate phosphoribosyltransferase family. Homodimer. Mg(2+) serves as cofactor.

The enzyme catalyses N-(5-phospho-beta-D-ribosyl)anthranilate + diphosphate = 5-phospho-alpha-D-ribose 1-diphosphate + anthranilate. The protein operates within amino-acid biosynthesis; L-tryptophan biosynthesis; L-tryptophan from chorismate: step 2/5. In terms of biological role, catalyzes the transfer of the phosphoribosyl group of 5-phosphorylribose-1-pyrophosphate (PRPP) to anthranilate to yield N-(5'-phosphoribosyl)-anthranilate (PRA). This chain is Anthranilate phosphoribosyltransferase, found in Prochlorococcus marinus subsp. pastoris (strain CCMP1986 / NIES-2087 / MED4).